The sequence spans 60 residues: uncharacterized protein (60 aa).

This is an uncharacterized protein from Escherichia coli O157:H7.